Here is a 407-residue protein sequence, read N- to C-terminus: Phosphopentomutase (407 aa).

6 residues coordinate Mn(2+): Asp11, Asp305, His310, Asp346, His347, and His358.

It belongs to the phosphopentomutase family. Mn(2+) serves as cofactor.

The protein localises to the cytoplasm. It catalyses the reaction 2-deoxy-alpha-D-ribose 1-phosphate = 2-deoxy-D-ribose 5-phosphate. It carries out the reaction alpha-D-ribose 1-phosphate = D-ribose 5-phosphate. Its pathway is carbohydrate degradation; 2-deoxy-D-ribose 1-phosphate degradation; D-glyceraldehyde 3-phosphate and acetaldehyde from 2-deoxy-alpha-D-ribose 1-phosphate: step 1/2. Its function is as follows. Isomerase that catalyzes the conversion of deoxy-ribose 1-phosphate (dRib-1-P) and ribose 1-phosphate (Rib-1-P) to deoxy-ribose 5-phosphate (dRib-5-P) and ribose 5-phosphate (Rib-5-P), respectively. In Legionella pneumophila (strain Corby), this protein is Phosphopentomutase.